Consider the following 284-residue polypeptide: Nucleotide-binding protein Sbal_3671 (284 aa).

Residue 8–15 (GRSGSGKS) participates in ATP binding. Residue 56–59 (DVRN) coordinates GTP.

It belongs to the RapZ-like family.

In terms of biological role, displays ATPase and GTPase activities. In Shewanella baltica (strain OS155 / ATCC BAA-1091), this protein is Nucleotide-binding protein Sbal_3671.